A 607-amino-acid polypeptide reads, in one-letter code: Tyrosine-protein kinase RYK (607 aa).

Residues methionine 1–glycine 20 form a disordered region. A signal peptide spans methionine 1–proline 25. Residues proline 26–arginine 227 lie on the Extracellular side of the membrane. One can recognise a WIF domain in the interval leucine 66–cysteine 194. N-linked (GlcNAc...) asparagine glycans are attached at residues asparagine 139, asparagine 174, asparagine 178, asparagine 182, and asparagine 209. Cysteine 159 and cysteine 194 are joined by a disulfide. Residues valine 228–alanine 248 form a helical membrane-spanning segment. Residues valine 249–valine 607 are Cytoplasmic-facing. Low complexity predominate over residues alanine 266–glutamine 282. The tract at residues alanine 266–asparagine 290 is disordered. A Protein kinase domain is found at isoleucine 330 to leucine 603. Residues leucine 336–isoleucine 344 and lysine 364 each bind ATP. The active-site Proton acceptor is the aspartate 465. Tyrosine 495 carries the post-translational modification Phosphotyrosine; by autocatalysis.

This sequence belongs to the protein kinase superfamily. Tyr protein kinase family. As to quaternary structure, interacts with DVL1 (via PDZ domain). Proteolytically cleaved, in part by presenilin, in response to WNT3 stimulation. Cleavage occurs during neuronal differentiation. Observed in all the tissues examined.

Its subcellular location is the membrane. The protein localises to the nucleus. The protein resides in the cytoplasm. The enzyme catalyses L-tyrosyl-[protein] + ATP = O-phospho-L-tyrosyl-[protein] + ADP + H(+). Functionally, may be a coreceptor along with FZD8 of Wnt proteins, such as WNT1, WNT3, WNT3A and WNT5A. Involved in neuron differentiation, axon guidance, corpus callosum establishment and neurite outgrowth. In response to WNT3 stimulation, receptor C-terminal cleavage occurs in its transmembrane region and allows the C-terminal intracellular product to translocate from the cytoplasm to the nucleus where it plays a crucial role in neuronal development. The protein is Tyrosine-protein kinase RYK of Homo sapiens (Human).